A 484-amino-acid polypeptide reads, in one-letter code: Argininosuccinate lyase (484 aa).

The protein belongs to the lyase 1 family. Argininosuccinate lyase subfamily.

The protein resides in the cytoplasm. The enzyme catalyses 2-(N(omega)-L-arginino)succinate = fumarate + L-arginine. It participates in amino-acid biosynthesis; L-arginine biosynthesis; L-arginine from L-ornithine and carbamoyl phosphate: step 3/3. This chain is Argininosuccinate lyase, found in Methanocaldococcus jannaschii (strain ATCC 43067 / DSM 2661 / JAL-1 / JCM 10045 / NBRC 100440) (Methanococcus jannaschii).